Consider the following 458-residue polypeptide: MKLWGGRFTKETNELVNNFNASISFDQKFYKQDIEGSIAHATMLGKQGIIPESESEQIVEGLKGILADIESGKLEITDEYEDIHTFMEATLIERIGDAGKRLHTGRSRNDQVALDMRLFTRQEVLNTDAELKELMAVILRIMKENTHTFMPGFTHLQKAQPVTVAHHFGAYFEMFKRDRSRLHDIYERMNYCPLGAGALAGTTYPLDRELTASLLGFYGPTLNSMDSVSDRDYLIEFLSALSTIMMHLSRFSEEICIWNSNEYRFIELDDAFSTGSSIMPQKKNPDIAELVRGKTGRVYGALISLLTTMKGIPLAYNKDMQEDKELSFDAFDTAKGCISLFKGMIDTMKFNNKRMEASAKNGFTNATDAADYLVKKGVPFREAHGIVGQLVLMCIEKNIALDDLSLDEYKAVSPVFDEDIYEAISLQTCVDKRLTLGAPGPEVMNKVIAIYDKYMEEN.

This sequence belongs to the lyase 1 family. Argininosuccinate lyase subfamily.

Its subcellular location is the cytoplasm. The enzyme catalyses 2-(N(omega)-L-arginino)succinate = fumarate + L-arginine. It functions in the pathway amino-acid biosynthesis; L-arginine biosynthesis; L-arginine from L-ornithine and carbamoyl phosphate: step 3/3. The protein is Argininosuccinate lyase of Lachnospira eligens (strain ATCC 27750 / DSM 3376 / VPI C15-48 / C15-B4) (Eubacterium eligens).